A 498-amino-acid chain; its full sequence is Type II secretion system protein E (498 aa).

Zn(2+) is bound by residues C394, C397, C425, and C428.

The protein belongs to the GSP E family. In terms of assembly, forms homooligomers; most probably hexamers. Interacts with OutL/GspL. The cofactor is Zn(2+).

It localises to the cell inner membrane. The catalysed reaction is ATP + H2O + cellular proteinSide 1 = ADP + phosphate + cellular proteinSide 2.. Its function is as follows. ATPase component of the type II secretion system required for the energy-dependent secretion of extracellular factors such as proteases and toxins from the periplasm. Acts as a molecular motor to provide the energy that is required for assembly of the pseudopilus and the extrusion of substrates generated in the cytoplasm. This chain is Type II secretion system protein E (outE), found in Dickeya dadantii (strain 3937) (Erwinia chrysanthemi (strain 3937)).